The sequence spans 383 residues: Cell division protein FtsZ (383 aa).

Residues 20-24 (GGGGN), 107-109 (GTG), Glu138, Arg142, and Asn186 contribute to the GTP site.

The protein belongs to the FtsZ family. Homodimer. Polymerizes to form a dynamic ring structure in a strictly GTP-dependent manner. Interacts directly with several other division proteins.

It localises to the cytoplasm. Essential cell division protein that forms a contractile ring structure (Z ring) at the future cell division site. The regulation of the ring assembly controls the timing and the location of cell division. One of the functions of the FtsZ ring is to recruit other cell division proteins to the septum to produce a new cell wall between the dividing cells. Binds GTP and shows GTPase activity. The protein is Cell division protein FtsZ of Shigella flexneri.